A 380-amino-acid chain; its full sequence is Cytochrome b (380 aa).

A run of 4 helical transmembrane segments spans residues 33-53 (FGSLLGACLILQITTGLFLAM), 77-98 (WIIRYLHANGASMLFICLFLHV), 113-133 (WNIGIILLLTTMATAFMGYVL), and 178-198 (FFTLHFILPFIITALTTLHLL). Positions 83 and 97 each coordinate heme b. H182 and H196 together coordinate heme b. H201 is a binding site for a ubiquinone. Transmembrane regions (helical) follow at residues 226–246 (TKDILGLFLFLLALMVLTLFS), 288–308 (LGGVLALLLSILILAVIPILH), 320–340 (LSQLLYWLLATDLLILTWIGG), and 347–367 (FITIGQVASVLYFTTILILMP).

The protein belongs to the cytochrome b family. In terms of assembly, the cytochrome bc1 complex contains 11 subunits: 3 respiratory subunits (MT-CYB, CYC1 and UQCRFS1), 2 core proteins (UQCRC1 and UQCRC2) and 6 low-molecular weight proteins (UQCRH/QCR6, UQCRB/QCR7, UQCRQ/QCR8, UQCR10/QCR9, UQCR11/QCR10 and a cleavage product of UQCRFS1). This cytochrome bc1 complex then forms a dimer. The cofactor is heme b.

The protein localises to the mitochondrion inner membrane. Its function is as follows. Component of the ubiquinol-cytochrome c reductase complex (complex III or cytochrome b-c1 complex) that is part of the mitochondrial respiratory chain. The b-c1 complex mediates electron transfer from ubiquinol to cytochrome c. Contributes to the generation of a proton gradient across the mitochondrial membrane that is then used for ATP synthesis. The polypeptide is Cytochrome b (MT-CYB) (Pan paniscus (Pygmy chimpanzee)).